A 511-amino-acid polypeptide reads, in one-letter code: Thioredoxin reductase 2, mitochondrial (511 aa).

Residues 1 to 21 (MAALRGAAARFRGRAPGGARG) constitute a mitochondrion transit peptide. FAD is bound at residue 29–58 (DLLVIGGGSGGLACAKEAAQLGKKVAVLDY). Cys-74 and Cys-79 form a disulfide bridge. Lys-316 is modified (N6-succinyllysine). The Proton acceptor role is filled by His-484. The segment at residues 509-510 (CU) is a cross-link (cysteinyl-selenocysteine (Cys-Sec)). A non-standard amino acid (selenocysteine) is located at residue Sec-510.

This sequence belongs to the class-I pyridine nucleotide-disulfide oxidoreductase family. In terms of assembly, homodimer. It depends on FAD as a cofactor.

It is found in the mitochondrion. It carries out the reaction [thioredoxin]-dithiol + NADP(+) = [thioredoxin]-disulfide + NADPH + H(+). Inhibited by 1-chloro-2,4-dinitrobenzene and by zinc, calcium, magnesium and Fe(2+) ions. Functionally, involved in the control of reactive oxygen species levels and the regulation of mitochondrial redox homeostasis. Maintains thioredoxin in a reduced state. May play a role in redox-regulated cell signaling. The protein is Thioredoxin reductase 2, mitochondrial (TXNRD2) of Bos taurus (Bovine).